A 270-amino-acid polypeptide reads, in one-letter code: PspA protein (270 aa).

The interval 238 to 270 (MRGEALPAGGTTATPRPATETSGGAIAEQPYGQ) is disordered. Over residues 240-258 (GEALPAGGTTATPRPATET) the composition is skewed to low complexity.

Belongs to the PspA/Vipp/IM30 family.

The protein localises to the cytoplasm. Its function is as follows. Involved in resistance to stress. Associates with and regulates lipid droplets (LDs) homeostasis under conditions of stress and may regulate non-replicating persistence (NRP). Could be involved in preservation of envelope integrity and tolerance to surface stress. This chain is PspA protein, found in Mycobacterium tuberculosis (strain ATCC 25177 / H37Ra).